The primary structure comprises 535 residues: Isoleucine N-monooxygenase 1 (535 aa).

The Cytoplasmic segment spans residues 1–8; sequence MGLMPDFL. Residues 9–29 traverse the membrane as a helical; Signal-anchor for type II membrane protein segment; it reads SLCHEFPWTFLLVVIFSFMIF. Over 30 to 535 the chain is Lumenal; that stretch reads KVTKTHLVNK…AAELYRTNEI (506 aa). Residues N38, N232, and N404 are each glycosylated (N-linked (GlcNAc...) asparagine). Residue C470 participates in heme binding.

This sequence belongs to the cytochrome P450 family. Requires heme as cofactor. As to expression, exclusively expressed in aerial parts. Highest expression in the apical leaves. Also detected in the second leaf from the top and in the stem. Not expressed in older leaves or roots.

The protein localises to the microsome membrane. The enzyme catalyses L-isoleucine + 2 reduced [NADPH--hemoprotein reductase] + 2 O2 = (1E,2S)-2-methylbutanal oxime + 2 oxidized [NADPH--hemoprotein reductase] + CO2 + 3 H2O + 2 H(+). It catalyses the reaction L-isoleucine + reduced [NADPH--hemoprotein reductase] + O2 = N-hydroxy-L-isoleucine + oxidized [NADPH--hemoprotein reductase] + H2O + 2 H(+). It carries out the reaction N-hydroxy-L-isoleucine + reduced [NADPH--hemoprotein reductase] + O2 = N,N-dihydroxy-L-isoleucine + oxidized [NADPH--hemoprotein reductase] + H2O + H(+). The catalysed reaction is L-valine + 2 reduced [NADPH--hemoprotein reductase] + 2 O2 = (E)-2-methylpropanal oxime + 2 oxidized [NADPH--hemoprotein reductase] + CO2 + 3 H2O + 2 H(+). The enzyme catalyses L-valine + reduced [NADPH--hemoprotein reductase] + O2 = N-hydroxy-L-valine + oxidized [NADPH--hemoprotein reductase] + H2O + 2 H(+). It catalyses the reaction N-hydroxy-L-valine + reduced [NADPH--hemoprotein reductase] + O2 = N,N-dihydroxy-L-valine + oxidized [NADPH--hemoprotein reductase] + H2O + H(+). The protein operates within secondary metabolite biosynthesis. Its function is as follows. Involved in the biosynthesis of the cyanogenic glucosides linamarin and lotaustralin and of the nitirle glucosides rhodiocyanoside A and D. Can use L-isoleucine &gt; L-valine as substrate, but not L-leucine, L-phenylalanine or L-tyrosine. Catalyzes multi-step reactions starting with two successive N-hydroxylations using L-isoleucine and, to a lower extent, L-valine as substrates leading to the formation of N,N-dihydroxy-L-valine and N,N-dihydroxy-L-isoleucine, respectively; following spontaneous reactions lead to the production of (E)-2-methylpropanal oxime and (1E,2S)-2-methylbutanal oxime, respectively. The sequence is that of Isoleucine N-monooxygenase 1 from Lotus japonicus (Lotus corniculatus var. japonicus).